The sequence spans 458 residues: tRNA modification GTPase MnmE (458 aa).

3 residues coordinate (6S)-5-formyl-5,6,7,8-tetrahydrofolate: arginine 22, glutamate 84, and arginine 123. Residues 220 to 379 (GIATAIIGRP…LEKAIADLFF (160 aa)) form the TrmE-type G domain. K(+) is bound at residue asparagine 230. GTP is bound by residues 230 to 235 (NVGKSS), 249 to 255 (TDIAGTT), and 274 to 277 (DTAG). Serine 234 serves as a coordination point for Mg(2+). The K(+) site is built by threonine 249, isoleucine 251, and threonine 254. Residue threonine 255 participates in Mg(2+) binding. Lysine 458 is a binding site for (6S)-5-formyl-5,6,7,8-tetrahydrofolate.

This sequence belongs to the TRAFAC class TrmE-Era-EngA-EngB-Septin-like GTPase superfamily. TrmE GTPase family. In terms of assembly, homodimer. Heterotetramer of two MnmE and two MnmG subunits. The cofactor is K(+).

Its subcellular location is the cytoplasm. Functionally, exhibits a very high intrinsic GTPase hydrolysis rate. Involved in the addition of a carboxymethylaminomethyl (cmnm) group at the wobble position (U34) of certain tRNAs, forming tRNA-cmnm(5)s(2)U34. The chain is tRNA modification GTPase MnmE from Bacillus cereus (strain ATCC 14579 / DSM 31 / CCUG 7414 / JCM 2152 / NBRC 15305 / NCIMB 9373 / NCTC 2599 / NRRL B-3711).